The primary structure comprises 187 residues: Ribosome-recycling factor (187 aa).

The tract at residues L141–G169 is disordered.

This sequence belongs to the RRF family.

It localises to the cytoplasm. Its function is as follows. Responsible for the release of ribosomes from messenger RNA at the termination of protein biosynthesis. May increase the efficiency of translation by recycling ribosomes from one round of translation to another. This chain is Ribosome-recycling factor, found in Limosilactobacillus reuteri (strain DSM 20016) (Lactobacillus reuteri).